We begin with the raw amino-acid sequence, 207 residues long: Probable nicotinate-nucleotide adenylyltransferase (207 aa).

It belongs to the NadD family.

It catalyses the reaction nicotinate beta-D-ribonucleotide + ATP + H(+) = deamido-NAD(+) + diphosphate. The protein operates within cofactor biosynthesis; NAD(+) biosynthesis; deamido-NAD(+) from nicotinate D-ribonucleotide: step 1/1. Catalyzes the reversible adenylation of nicotinate mononucleotide (NaMN) to nicotinic acid adenine dinucleotide (NaAD). In Desulfitobacterium hafniense (strain Y51), this protein is Probable nicotinate-nucleotide adenylyltransferase.